The primary structure comprises 354 residues: S-adenosylmethionine:tRNA ribosyltransferase-isomerase (354 aa).

Belongs to the QueA family. In terms of assembly, monomer.

It is found in the cytoplasm. It carries out the reaction 7-aminomethyl-7-carbaguanosine(34) in tRNA + S-adenosyl-L-methionine = epoxyqueuosine(34) in tRNA + adenine + L-methionine + 2 H(+). Its pathway is tRNA modification; tRNA-queuosine biosynthesis. In terms of biological role, transfers and isomerizes the ribose moiety from AdoMet to the 7-aminomethyl group of 7-deazaguanine (preQ1-tRNA) to give epoxyqueuosine (oQ-tRNA). This chain is S-adenosylmethionine:tRNA ribosyltransferase-isomerase, found in Klebsiella pneumoniae (strain 342).